The primary structure comprises 1036 residues: Potassium-transporting ATPase alpha chain 2 (1036 aa).

Residues 1 to 50 (MRRKTEIYSVELNGTKDVKPADQRDDKKFKGAKNKDLEPNKSHEKEELKK) are disordered. Residues 1–99 (MRRKTEIYSV…PNTLTPPKQT (99 aa)) are Cytoplasmic-facing. Residues 14–50 (GTKDVKPADQRDDKKFKGAKNKDLEPNKSHEKEELKK) are compositionally biased toward basic and acidic residues. Residues 100-120 (PEIIKFLKQMVGGFSILLWIG) form a helical membrane-spanning segment. Topologically, residues 121 to 143 (AALCWIAFVIQYVNNSASLDNVY) are lumenal. The chain crosses the membrane as a helical span at residues 144 to 164 (LGAILVLVVILTGIFAYYQEA). The Cytoplasmic portion of the chain corresponds to 165 to 300 (KSTNIMASFS…SEKTPIAIEI (136 aa)). A helical transmembrane segment spans residues 301–320 (EHFVHIVAGVAVSIDIIFFI). The Lumenal portion of the chain corresponds to 321–332 (TAVCMKYYVLDA). The helical transmembrane segment at 333 to 350 (IIFLISIIVANVPEGLLA) threads the bilayer. At 351-784 (TVTVTLSLTA…EEGRLIFDNL (434 aa)) the chain is on the cytoplasmic side. Asp388 functions as the 4-aspartylphosphate intermediate in the catalytic mechanism. Residues Asp729 and Asp733 each coordinate Mg(2+). The chain crosses the membrane as a helical span at residues 785 to 804 (KKTIAYTLTKNIAELCPFLI). The Lumenal portion of the chain corresponds to 805–814 (YIVAGLPLPI). Residues 815–835 (GTITILFIDLGTDIIPSIALA) form a helical membrane-spanning segment. Topologically, residues 836 to 855 (YEKAESDIMNRKPRHKKKDR) are cytoplasmic. The helical transmembrane segment at 856-878 (LVNTQLAIYSYLHIGLMQALGGF) threads the bilayer. The Lumenal segment spans residues 879-930 (LVYFTVYAQQGFWPTSLINLRVAWETDDINDLEDSYGQEWTRYQRKYLEWTG). The helical transmembrane segment at 931-950 (STAFFVAIMIQQIADLIIRK) threads the bilayer. Residues 951–964 (TRRNSIFQQGLFRN) lie on the Cytoplasmic side of the membrane. Ser955 is subject to Phosphoserine; by PKA. The chain crosses the membrane as a helical span at residues 965 to 983 (KVIWVGIASQVIVALILSY). Residues 984 to 998 (GLGSVPALSFTMLRV) lie on the Lumenal side of the membrane. Residues 999 to 1019 (QYWFVAVPHAILIWVYDEMRK) traverse the membrane as a helical segment. At 1020 to 1036 (LFIRLYPGSWWDKNMYY) the chain is on the cytoplasmic side.

Belongs to the cation transport ATPase (P-type) (TC 3.A.3) family. Type IIC subfamily. As to quaternary structure, the ATPase pump is composed of a catalytic alpha subunit and an auxiliary non-catalytic beta subunit. The alpha subunit pairs with the beta subunit of gastric H(+)/K(+) ATPase ATP4B or the beta subunit of Na(+)/K(+) ATPases ATP1B1 and ATP1B3; this interaction is required for the formation of a functionally active pump and its targeting at the plasma membrane. In terms of tissue distribution, expressed at high levels in distal colon, coagulating and preputial glands; at much lower levels in proximal colon, kidney, uterus, brain, placenta and lung; and at trace levels in heart and forestomach. Expressed in distal colon epithelium (at protein level). Expressed in anterior prostate (at protein level).

The protein localises to the apical cell membrane. It catalyses the reaction K(+)(out) + ATP + H2O + H(+)(in) = K(+)(in) + ADP + phosphate + 2 H(+)(out). The enzyme catalyses K(+)(out) + Na(+)(in) + ATP + H2O = K(+)(in) + Na(+)(out) + ADP + phosphate + H(+). With respect to regulation, up-regulated by K(+) ions in a dose-dependent way. The catalytic subunit of a H(+)/K(+) ATPase and/or Na(+)/K(+) ATPase pump which transports K(+) ions in exchange for Na(+) and/or H(+) ions across the apical membrane of epithelial cells. Uses ATP as an energy source to pump K(+) ions into the cell while transporting Na(+) and/or H(+) ions to the extracellular compartment. Involved in the maintenance of electrolyte homeostasis through K(+) ion absorption in kidney and colon. In the airway epithelium, may play a primary role in mucus acidification regulating its viscosity and clearance. The polypeptide is Potassium-transporting ATPase alpha chain 2 (Atp12a) (Rattus norvegicus (Rat)).